The chain runs to 1141 residues: Serine-aspartate repeat-containing protein E (1141 aa).

The signal sequence occupies residues 1-52; sequence MINRDNKKAITKKGMISNRLNKFSIRKYTVGTASILVGTTLIFGLGNQEAKA. Residues 23-34 carry the YSIRK-G/S signaling motif motif; it reads FSIRKYTVGTAS. Residues 53-601 are ligand binding A region; sequence AENTSTENAK…GDGTVKPEEK (549 aa). The interval 54–225 is disordered; it reads ENTSTENAKQ…SKEELKNNPE (172 aa). Residues 61 to 75 are compositionally biased toward basic and acidic residues; that stretch reads AKQDDATTSDNKEVV. Low complexity predominate over residues 77–90; that stretch reads EAENNSTTENDSTN. Basic and acidic residues predominate over residues 92–109; that stretch reads IKKETNTDSQPEAKEEST. Positions 110–126 are enriched in low complexity; that stretch reads KSSTQQQQNNVTATTET. Positions 130–145 are enriched in basic and acidic residues; the sequence is NIEKENVKPSTDKTAT. Residues 158-207 show a composition bias toward polar residues; the sequence is PNNTNNDVTTKPSTSEIQTKPTTPQESTNIENSQPQPTPSKVDNQVTDAT. The span at 216–225 shows a compositional bias: basic and acidic residues; sequence SKEELKNNPE. CNA-B domains follow at residues 602 to 714, 715 to 824, and 825 to 935; these read LYKI…YKEP, KYNL…YKTP, and KYSL…EEDT. Residues 899 to 1117 form a disordered region; the sequence is VTNTTEDDKD…GSENNGSNNA (219 aa). Composition is skewed to acidic residues over residues 903–913 and 930–1080; these read TEDDKDADGGE and YFEE…DSDS. The LPXTG sorting signal motif lies at 1104-1108; the sequence is LPETG. The residue at position 1107 (Thr-1107) is a Pentaglycyl murein peptidoglycan amidated threonine. Positions 1108–1141 are cleaved as a propeptide — removed by sortase; sequence GSENNGSNNATLFGGLFAALGSLLLFGRRKKQNK.

This sequence belongs to the serine-aspartate repeat-containing protein (SDr) family. Interacts with host complement factor H/CFAH (via C-terminus). Interacts with host complement regulator C4BPA.

It localises to the secreted. Its subcellular location is the cell wall. Functionally, cell surface-associated calcium-binding protein which plays an important role in adhesion and pathogenesis. Contributes to the resistance to killing by innate immune components in blood and thus attenuates bacterial clearance by interacting with host complement factor H/CFAH and modulating its activity. Also inhibits bacterial opsonization and killing by interacting with host complement regulator C4BPA and thus inhibiting classical complement pathway activation. This chain is Serine-aspartate repeat-containing protein E (sdrE), found in Staphylococcus aureus (strain MSSA476).